We begin with the raw amino-acid sequence, 136 residues long: Large ribosomal subunit protein uL16 (136 aa).

This sequence belongs to the universal ribosomal protein uL16 family. As to quaternary structure, part of the 50S ribosomal subunit.

Functionally, binds 23S rRNA and is also seen to make contacts with the A and possibly P site tRNAs. This chain is Large ribosomal subunit protein uL16, found in Hamiltonella defensa subsp. Acyrthosiphon pisum (strain 5AT).